The primary structure comprises 151 residues: Ribosomal RNA large subunit methyltransferase H (151 aa).

S-adenosyl-L-methionine contacts are provided by residues Leu-73, Gly-100, and Leu-119–Leu-124.

Belongs to the RNA methyltransferase RlmH family. Homodimer.

The protein localises to the cytoplasm. It carries out the reaction pseudouridine(1915) in 23S rRNA + S-adenosyl-L-methionine = N(3)-methylpseudouridine(1915) in 23S rRNA + S-adenosyl-L-homocysteine + H(+). Its function is as follows. Specifically methylates the pseudouridine at position 1915 (m3Psi1915) in 23S rRNA. In Campylobacter hominis (strain ATCC BAA-381 / DSM 21671 / CCUG 45161 / LMG 19568 / NCTC 13146 / CH001A), this protein is Ribosomal RNA large subunit methyltransferase H.